The primary structure comprises 526 residues: Probable rhamnogalacturonase B (526 aa).

The N-terminal stretch at methionine 1–alanine 20 is a signal peptide. Cysteine 41 and cysteine 67 are oxidised to a cystine. Asparagine 144 carries N-linked (GlcNAc...) asparagine glycosylation. Aspartate 218 acts as the Proton donor in catalysis. Cysteine 220 and cysteine 237 are oxidised to a cystine. Asparagine 238 and asparagine 253 each carry an N-linked (GlcNAc...) asparagine glycan. Residue histidine 293 is part of the active site. An N-linked (GlcNAc...) asparagine glycan is attached at asparagine 320. 2 disulfide bridges follow: cysteine 343–cysteine 349 and cysteine 371–cysteine 380.

This sequence belongs to the glycosyl hydrolase 28 family.

It localises to the secreted. It catalyses the reaction Endohydrolysis of alpha-D-GalA-(1-&gt;2)-alpha-L-Rha glycosidic bond in the rhamnogalacturonan I backbone with initial inversion of anomeric configuration releasing oligosaccharides with beta-D-GalA at the reducing end.. Functionally, pectinolytic enzymes consist of four classes of enzymes: pectine lyase, polygalacturonase, pectin methylesterase and rhamnogalacturonase. Hydrolyzes alpha-D-galacturonopyranosyl-(1,2)-alpha-L-rhamnopyranosyl linkages in the backbone of the hairy regions of pectins. The chain is Probable rhamnogalacturonase B (rhgB) from Aspergillus terreus (strain NIH 2624 / FGSC A1156).